A 503-amino-acid polypeptide reads, in one-letter code: Putative cytochrome P450 71A28 (503 aa).

The chain crosses the membrane as a helical span at residues 1–21; sequence MILISLCFTTFLAFLFLNPLL. Residue Cys443 coordinates heme.

It belongs to the cytochrome P450 family. It depends on heme as a cofactor.

It is found in the membrane. This is Putative cytochrome P450 71A28 (CYP71A28) from Arabidopsis thaliana (Mouse-ear cress).